We begin with the raw amino-acid sequence, 799 residues long: Elongation factor G, mitochondrial (799 aa).

The transit peptide at 1–34 (MRCPSLTRLPYRAVSGLPRSVVRLQSQNFLTRRC) directs the protein to the mitochondrion. A tr-type G domain is found at 97-384 (SRVRNIGIAA…GVVDYLPNPA (288 aa)). GTP is bound by residues 106-113 (AHIDSGKT), 182-186 (DTPGH), and 236-239 (NKMD).

It belongs to the TRAFAC class translation factor GTPase superfamily. Classic translation factor GTPase family. EF-G/EF-2 subfamily.

It is found in the mitochondrion. Its pathway is protein biosynthesis; polypeptide chain elongation. Mitochondrial GTPase that catalyzes the GTP-dependent ribosomal translocation step during translation elongation. During this step, the ribosome changes from the pre-translocational (PRE) to the post-translocational (POST) state as the newly formed A-site-bound peptidyl-tRNA and P-site-bound deacylated tRNA move to the P and E sites, respectively. Catalyzes the coordinated movement of the two tRNA molecules, the mRNA and conformational changes in the ribosome. This is Elongation factor G, mitochondrial (mef1) from Aspergillus flavus (strain ATCC 200026 / FGSC A1120 / IAM 13836 / NRRL 3357 / JCM 12722 / SRRC 167).